Consider the following 153-residue polypeptide: Putative phosphatidylglycerol/phosphatidylinositol transfer protein DDB_G0285639 (153 aa).

A signal peptide spans 1-21; that stretch reads MIIKILLLIISISLFLNISIG. Residues Asn-17, Asn-61, Asn-87, Asn-117, and Asn-140 are each glycosylated (N-linked (GlcNAc...) asparagine).

It belongs to the NPC2 family. In terms of assembly, monomer.

Its function is as follows. Catalyzes the intermembrane transfer of phosphatidylglycerol and phosphatidylinositol. The protein is Putative phosphatidylglycerol/phosphatidylinositol transfer protein DDB_G0285639 of Dictyostelium discoideum (Social amoeba).